A 623-amino-acid polypeptide reads, in one-letter code: Chaperone protein HtpG (623 aa).

The tract at residues 1-330 (MIMTQEKKKF…SEDLPLNISR (330 aa)) is a; substrate-binding. Residues 331–546 (ESLQHNSVLE…DAAMDIRMER (216 aa)) are b. The tract at residues 477-497 (SDIDVEQTTSQSEEKNTDSKK) is disordered. Positions 488–497 (SEEKNTDSKK) are enriched in basic and acidic residues. Positions 547–623 (FLIEQKQIAN…LNDIVQKAIL (77 aa)) are c.

Belongs to the heat shock protein 90 family. As to quaternary structure, homodimer.

It is found in the cytoplasm. Its function is as follows. Molecular chaperone. Has ATPase activity. This is Chaperone protein HtpG from Rickettsia massiliae (strain Mtu5).